We begin with the raw amino-acid sequence, 323 residues long: GDSL esterase/lipase At5g03980 (323 aa).

The N-terminal stretch at 1–21 is a signal peptide; it reads MSTTKALSLLVFILFVSLVHS. Ser36 functions as the Nucleophile in the catalytic mechanism. An N-linked (GlcNAc...) asparagine glycan is attached at Asn77. Residues Asp294 and His297 contribute to the active site.

The protein belongs to the 'GDSL' lipolytic enzyme family.

The protein resides in the secreted. The chain is GDSL esterase/lipase At5g03980 from Arabidopsis thaliana (Mouse-ear cress).